A 496-amino-acid polypeptide reads, in one-letter code: Probable G-protein coupled receptor Mth-like 5 (496 aa).

Topologically, residues 1-219 are extracellular; the sequence is MLVKTLGAHF…SNFLLRKILN (219 aa). N-linked (GlcNAc...) asparagine glycosylation occurs at N82. A helical transmembrane segment spans residues 220-240; that stretch reads PIFHGISLVILLVIAIIYFIL. The Cytoplasmic portion of the chain corresponds to 241–246; that stretch reads PTLRDL. The chain crosses the membrane as a helical span at residues 247–267; that stretch reads VGNIVTTIAMCLMVSQAADLV. Residues 268 to 276 lie on the Extracellular side of the membrane; the sequence is RIFTELTSH. Residues 277-297 form a helical membrane-spanning segment; the sequence is VSFIVADIILCFSLLAAFFWL. At 298–327 the chain is on the cytoplasmic side; it reads NSFGFYIWKTFRSRNVFLRVTDGRKYCYYS. Residues 328 to 348 traverse the membrane as a helical segment; sequence AYAWGCTATMAALAVFAHFFL. At 349–366 the chain is on the extracellular side; sequence DAESYKQEHMVGEQETIG. The helical transmembrane segment at 367 to 387 threads the bilayer; that stretch reads WLGICIFFAPIACTILVNIFF. At 388 to 411 the chain is on the cytoplasmic side; it reads YVTTRKLINRRTVYGRIAHKLKAN. A helical transmembrane segment spans residues 412–432; the sequence is FIMFSLMLLVMSIAWLFLIMS. Residues 433 to 438 are Extracellular-facing; the sequence is WLQMEG. The chain crosses the membrane as a helical span at residues 439–459; it reads LLYAHIVVNALQTPLLLYICV. At 460–496 the chain is on the cytoplasmic side; sequence LRQRHVTFLLKKTCCYNEPPSANDWGDELHYMNGNDY.

This sequence belongs to the G-protein coupled receptor 2 family. Mth subfamily.

The protein resides in the cell membrane. The sequence is that of Probable G-protein coupled receptor Mth-like 5 (mthl5) from Drosophila melanogaster (Fruit fly).